We begin with the raw amino-acid sequence, 380 residues long: Chaperone protein DnaJ (380 aa).

The 66-residue stretch at 5–70 folds into the J domain; that stretch reads DYYEALGVAR…RKRTAYDQFG (66 aa). The CR-type zinc-finger motif lies at 137–215; the sequence is GTTAKIRIPT…CRGEGRVREH (79 aa). The Zn(2+) site is built by C150, C153, C167, C170, C189, C192, C203, and C206. CXXCXGXG motif repeat units lie at residues 150–157, 167–174, 189–196, and 203–210; these read CKACEGSG, CPTCGGHG, CPRCHGSG, and CSTCRGEG. Residues 222–247 form a disordered region; the sequence is IPPGVDTGDRIRLTGEGEAGESGGPP.

This sequence belongs to the DnaJ family. As to quaternary structure, homodimer. Zn(2+) serves as cofactor.

It localises to the cytoplasm. In terms of biological role, participates actively in the response to hyperosmotic and heat shock by preventing the aggregation of stress-denatured proteins and by disaggregating proteins, also in an autonomous, DnaK-independent fashion. Unfolded proteins bind initially to DnaJ; upon interaction with the DnaJ-bound protein, DnaK hydrolyzes its bound ATP, resulting in the formation of a stable complex. GrpE releases ADP from DnaK; ATP binding to DnaK triggers the release of the substrate protein, thus completing the reaction cycle. Several rounds of ATP-dependent interactions between DnaJ, DnaK and GrpE are required for fully efficient folding. Also involved, together with DnaK and GrpE, in the DNA replication of plasmids through activation of initiation proteins. The protein is Chaperone protein DnaJ of Nitrosococcus oceani (strain ATCC 19707 / BCRC 17464 / JCM 30415 / NCIMB 11848 / C-107).